An 87-amino-acid polypeptide reads, in one-letter code: Cell division protein ZapA (87 aa).

A coiled-coil region spans residues 64-87 (VHDYIKLKEEYDRLLQKLHKEKDE).

Belongs to the ZapA family. Type 2 subfamily. In terms of assembly, homodimer. Interacts with FtsZ.

Its subcellular location is the cytoplasm. Its function is as follows. Activator of cell division through the inhibition of FtsZ GTPase activity, therefore promoting FtsZ assembly into bundles of protofilaments necessary for the formation of the division Z ring. It is recruited early at mid-cell but it is not essential for cell division. The sequence is that of Cell division protein ZapA from Geobacillus sp. (strain WCH70).